The chain runs to 396 residues: KiSS-1 receptor (396 aa).

The Extracellular segment spans residues 1 to 46; that stretch reads MAAEATLGPNVSWWAPSNASGCPGCGVNASDGPGSAPRPLDAWLVP. Asn10, Asn18, and Asn28 each carry an N-linked (GlcNAc...) asparagine glycan. Residues 47–67 traverse the membrane as a helical segment; sequence LFFAALMLLGLVGNSLVIFVI. The Cytoplasmic segment spans residues 68 to 90; it reads CRHKHMQTVTNFYIANLAATDVT. A helical membrane pass occupies residues 91 to 111; sequence FLLCCVPFTALLYPLPTWVLG. Residues 112–120 are Extracellular-facing; sequence DFMCKFVNY. An intrachain disulfide couples Cys115 to Cys191. Residues 121-138 traverse the membrane as a helical segment; it reads IQQVSVQATCATLTAMSV. Over 139–159 the chain is Cytoplasmic; the sequence is DRWYVTVFPLRALHRRTPRLA. The helical transmembrane segment at 160–180 threads the bilayer; sequence LTVSLSIWVGSAAVSAPVLAL. The Extracellular portion of the chain corresponds to 181–202; that stretch reads HRLSPGPHTYCSEAFPSRALER. A helical transmembrane segment spans residues 203-223; sequence AFALYNLLALYLLPLLATCAC. The Cytoplasmic portion of the chain corresponds to 224–264; the sequence is YGAMLRHLGRAAVRPAPTDGALQGQLLAQRAGAVRTKVSRL. Residues 265–285 traverse the membrane as a helical segment; it reads VAAVVLLFAACWGPIQLFLVL. The Extracellular portion of the chain corresponds to 286–305; the sequence is QALGPSGAWHPRSYAAYALK. The helical transmembrane segment at 306–326 threads the bilayer; sequence IWAHCMSYSNSALNPLLYAFL. At 327-396 the chain is on the cytoplasmic side; it reads GSHFRQAFCR…SVQDEHTAPL (70 aa). The tract at residues 346 to 396 is disordered; that stretch reads RRPHASAHSDRAAPHSVPHSRAAHPVRVRTPEPGNPVRRSPSVQDEHTAPL.

This sequence belongs to the G-protein coupled receptor 1 family. Highest expression levels in the cerebrum and cecum. Moderate expression in the ovary, colon and placenta. Low levels in the uterus, small intestine, and thymus. Expressed only moderately in the placenta. No expression in kidney tissues. Has a complex and abundant central nervous system expression pattern. Expressed in brain regions such as pons, midbrain, thalamus, hypothalamus, hippocampus, amygdala, cortex, frontal cortex, and striatum. No expression in the cerebellum. Persistent expression is detected in hypothalamus throughout postnatal development, with maximum expression levels at puberty in both male and female. Hypothalamic expression changed throughout the estrus cycle and is significantly increased after gonadectomy, a rise that is prevented by sex steroid replacement both in males and females.

It is found in the cell membrane. Its function is as follows. Receptor for metastin, a C-terminally amidated peptide of KiSS1. KiSS1 is a metastasis suppressor protein. Activation of the receptor inhibits cell proliferation and cell migration, key characteristics of tumor metastasis. The receptor is essential for normal gonadotropin-released hormone physiology and for puberty. The hypothalamic KiSS1/KISS1R system is a pivotal factor in central regulation of the gonadotropic axis at puberty and in adulthood. Analysis of the transduction pathways activated by the receptor identifies coupling to phospholipase C and intracellular calcium release through pertussis toxin-insensitive G(q) proteins. This chain is KiSS-1 receptor (Kiss1r), found in Rattus norvegicus (Rat).